Reading from the N-terminus, the 318-residue chain is MTQFEIECLDSKVYNARDHWSRFVIDPLKPGQGTTLGNALRRTLLSELEGLAITAVRIAGVSHEFSTINGIREDVLEILLNLKEIVFSGQLQESTIGRLTVQGPAIVTARSFELPPEIKLIDPEQYIATICGNNTLEMEFKIEVGSGYKIVEKDNSTEHFEFLQVDSVFMPVKKVNFRIEETRGENNILNEQLILDIWTNGSISAKEAISNAADNLINLFSPLKTIDGESETDYETNETSHINQILIEELQLSVRAYNCLKRGCAHIHSVADLLDYSQEDLIEIKNFGQKSAEEVIDALQKRLGINLPKEKTTKIYNK.

The alpha N-terminal domain (alpha-NTD) stretch occupies residues 1-227 (MTQFEIECLD…NLFSPLKTID (227 aa)). The interval 241–318 (HINQILIEEL…KEKTTKIYNK (78 aa)) is alpha C-terminal domain (alpha-CTD).

Belongs to the RNA polymerase alpha chain family. As to quaternary structure, in plastids the minimal PEP RNA polymerase catalytic core is composed of four subunits: alpha, beta, beta', and beta''. When a (nuclear-encoded) sigma factor is associated with the core the holoenzyme is formed, which can initiate transcription.

The protein localises to the plastid. It is found in the chloroplast. The catalysed reaction is RNA(n) + a ribonucleoside 5'-triphosphate = RNA(n+1) + diphosphate. Its function is as follows. DNA-dependent RNA polymerase catalyzes the transcription of DNA into RNA using the four ribonucleoside triphosphates as substrates. This is DNA-directed RNA polymerase subunit alpha from Guillardia theta (Cryptophyte).